We begin with the raw amino-acid sequence, 326 residues long: Biotin synthase (326 aa).

Residues 47–274 (NEVQVSSLLS…ASRVRLSAGR (228 aa)) form the Radical SAM core domain. [4Fe-4S] cluster contacts are provided by Cys-62, Cys-66, and Cys-69. [2Fe-2S] cluster-binding residues include Cys-106, Cys-137, Cys-197, and Arg-269.

This sequence belongs to the radical SAM superfamily. Biotin synthase family. As to quaternary structure, homodimer. The cofactor is [4Fe-4S] cluster. [2Fe-2S] cluster serves as cofactor.

The catalysed reaction is (4R,5S)-dethiobiotin + (sulfur carrier)-SH + 2 reduced [2Fe-2S]-[ferredoxin] + 2 S-adenosyl-L-methionine = (sulfur carrier)-H + biotin + 2 5'-deoxyadenosine + 2 L-methionine + 2 oxidized [2Fe-2S]-[ferredoxin]. It functions in the pathway cofactor biosynthesis; biotin biosynthesis; biotin from 7,8-diaminononanoate: step 2/2. Its function is as follows. Catalyzes the conversion of dethiobiotin (DTB) to biotin by the insertion of a sulfur atom into dethiobiotin via a radical-based mechanism. This chain is Biotin synthase, found in Methylococcus capsulatus (strain ATCC 33009 / NCIMB 11132 / Bath).